A 156-amino-acid polypeptide reads, in one-letter code: Small ribosomal subunit protein uS7 (156 aa).

The protein belongs to the universal ribosomal protein uS7 family. As to quaternary structure, part of the 30S ribosomal subunit. Contacts proteins S9 and S11.

Functionally, one of the primary rRNA binding proteins, it binds directly to 16S rRNA where it nucleates assembly of the head domain of the 30S subunit. Is located at the subunit interface close to the decoding center, probably blocks exit of the E-site tRNA. This is Small ribosomal subunit protein uS7 from Klebsiella pneumoniae subsp. pneumoniae (strain ATCC 700721 / MGH 78578).